Here is a 193-residue protein sequence, read N- to C-terminus: ATP-dependent Clp protease proteolytic subunit (193 aa).

S98 acts as the Nucleophile in catalysis. H123 is an active-site residue.

The protein belongs to the peptidase S14 family. As to quaternary structure, fourteen ClpP subunits assemble into 2 heptameric rings which stack back to back to give a disk-like structure with a central cavity, resembling the structure of eukaryotic proteasomes.

Its subcellular location is the cytoplasm. It carries out the reaction Hydrolysis of proteins to small peptides in the presence of ATP and magnesium. alpha-casein is the usual test substrate. In the absence of ATP, only oligopeptides shorter than five residues are hydrolyzed (such as succinyl-Leu-Tyr-|-NHMec, and Leu-Tyr-Leu-|-Tyr-Trp, in which cleavage of the -Tyr-|-Leu- and -Tyr-|-Trp bonds also occurs).. Functionally, cleaves peptides in various proteins in a process that requires ATP hydrolysis. Has a chymotrypsin-like activity. Plays a major role in the degradation of misfolded proteins. In Clostridium acetobutylicum (strain ATCC 824 / DSM 792 / JCM 1419 / IAM 19013 / LMG 5710 / NBRC 13948 / NRRL B-527 / VKM B-1787 / 2291 / W), this protein is ATP-dependent Clp protease proteolytic subunit.